The chain runs to 549 residues: Exodeoxyribonuclease 7 large subunit (549 aa).

Residues 511-549 are disordered; sequence LVATDPPVDPKPTRKPVQKSSSPKPSSRKPKKSQQEDLF.

This sequence belongs to the XseA family. As to quaternary structure, heterooligomer composed of large and small subunits.

It is found in the cytoplasm. It catalyses the reaction Exonucleolytic cleavage in either 5'- to 3'- or 3'- to 5'-direction to yield nucleoside 5'-phosphates.. Its function is as follows. Bidirectionally degrades single-stranded DNA into large acid-insoluble oligonucleotides, which are then degraded further into small acid-soluble oligonucleotides. This Beijerinckia indica subsp. indica (strain ATCC 9039 / DSM 1715 / NCIMB 8712) protein is Exodeoxyribonuclease 7 large subunit.